The sequence spans 948 residues: Alanine--tRNA ligase (948 aa).

4 residues coordinate Zn(2+): H638, H642, C739, and H743.

The protein belongs to the class-II aminoacyl-tRNA synthetase family. The cofactor is Zn(2+).

Its subcellular location is the cytoplasm. It carries out the reaction tRNA(Ala) + L-alanine + ATP = L-alanyl-tRNA(Ala) + AMP + diphosphate. Its function is as follows. Catalyzes the attachment of alanine to tRNA(Ala) in a two-step reaction: alanine is first activated by ATP to form Ala-AMP and then transferred to the acceptor end of tRNA(Ala). Also edits incorrectly charged Ser-tRNA(Ala) and Gly-tRNA(Ala) via its editing domain. This is Alanine--tRNA ligase from Paracidovorax citrulli (strain AAC00-1) (Acidovorax citrulli).